A 189-amino-acid polypeptide reads, in one-letter code: MGDKIFHNLSSKTLVATPHVITKGIYHKSLIYMLSHTEEGAIGLIFNRLVNHIDLKSFFKIKNDDITTPVMVPIYLGGPVEHEKGFFLHSSDYNKNLLLDFQNDLAVSSNLEISEDIAFGKGPKNSLFIVGYTAWKPGQLEEELERNLWLVMDCNKEFIFADNPEDKWHSALKHLGIDEIYFSAQIGNA.

Belongs to the UPF0301 (AlgH) family.

This is UPF0301 protein A1C_00165 from Rickettsia akari (strain Hartford).